Consider the following 635-residue polypeptide: Threonine--tRNA ligase (635 aa).

A TGS domain is found at 1–61 (MVSIRLPDGS…DHDVALAIVT (61 aa)). A catalytic region spans residues 242–533 (DHRKLGKQLD…LIEHHAGAMP (292 aa)). 3 residues coordinate Zn(2+): cysteine 333, histidine 384, and histidine 510.

This sequence belongs to the class-II aminoacyl-tRNA synthetase family. Homodimer. Requires Zn(2+) as cofactor.

The protein localises to the cytoplasm. It catalyses the reaction tRNA(Thr) + L-threonine + ATP = L-threonyl-tRNA(Thr) + AMP + diphosphate + H(+). In terms of biological role, catalyzes the attachment of threonine to tRNA(Thr) in a two-step reaction: L-threonine is first activated by ATP to form Thr-AMP and then transferred to the acceptor end of tRNA(Thr). Also edits incorrectly charged L-seryl-tRNA(Thr). This is Threonine--tRNA ligase from Paraburkholderia xenovorans (strain LB400).